The sequence spans 204 residues: uncharacterized protein (204 aa).

Residues 109-136 are a coiled coil; it reads QFDIDVHKDQIEKLKDLYKALLRIAETT.

This is an uncharacterized protein from Bacillus subtilis (strain 168).